The sequence spans 1033 residues: SIT4-associating protein SAP190 (1033 aa).

4 disordered regions span residues 32-82 (DQDD…TTES), 147-213 (PEII…QVET), 768-813 (FGND…HDSG), and 828-1033 (ENEE…KEAF). A compositionally biased stretch (basic and acidic residues) spans 158–170 (ILIERDRKDKKED). Residues 171–182 (AEEGGDSEETTN) show a composition bias toward acidic residues. Basic and acidic residues predominate over residues 183–195 (DSDHDSGDERSVD). Ser774 is modified (phosphoserine). Composition is skewed to acidic residues over residues 784 to 793 (SEDIIGDTEG) and 828 to 838 (ENEEDYAEYSD). Residues Ser857, Ser862, and Ser892 each carry the phosphoserine modification. Basic and acidic residues predominate over residues 858-879 (DDGKSKSAESEFTDKISEHRDG). The span at 909 to 924 (SRSQPSDPKLQDQNIF) shows a compositional bias: polar residues. A compositionally biased stretch (acidic residues) spans 932-944 (GVGDDDDYMDPND). Position 990 is a phosphothreonine (Thr990). Ser991 is modified (phosphoserine). Residues 1000 to 1018 (ISSDEEDSEDEDEENDMGN) show a composition bias toward acidic residues.

The protein belongs to the SAPS family. In terms of assembly, associates with the SIT4 protein phosphatase catalytic subunit in a cell-cycle-dependent manner. Post-translationally, hyperphosphorylated in the absence of SIT4.

The protein localises to the cytoplasm. Functionally, positive regulator of protein phosphatase SIT4. Involved in the general amino acid control (GAAC) response regulated by TOR. Involved in the dephosphorylation of the elongator complex subunit IKI3. The sequence is that of SIT4-associating protein SAP190 (SAP190) from Saccharomyces cerevisiae (strain AWRI1631) (Baker's yeast).